Reading from the N-terminus, the 294-residue chain is Shikimate dehydrogenase (NADP(+)) (294 aa).

Shikimate-binding positions include 23 to 25 and Thr76; that span reads SRS. Lys80 acts as the Proton acceptor in catalysis. The shikimate site is built by Asn101 and Asp116. Residues 141-145 and Met233 each bind NADP(+); that span reads GAGGA. Shikimate is bound at residue Tyr235. NADP(+) is bound at residue Gly256.

Belongs to the shikimate dehydrogenase family. In terms of assembly, homodimer.

The catalysed reaction is shikimate + NADP(+) = 3-dehydroshikimate + NADPH + H(+). Its pathway is metabolic intermediate biosynthesis; chorismate biosynthesis; chorismate from D-erythrose 4-phosphate and phosphoenolpyruvate: step 4/7. In terms of biological role, involved in the biosynthesis of the chorismate, which leads to the biosynthesis of aromatic amino acids. Catalyzes the reversible NADPH linked reduction of 3-dehydroshikimate (DHSA) to yield shikimate (SA). This Methylibium petroleiphilum (strain ATCC BAA-1232 / LMG 22953 / PM1) protein is Shikimate dehydrogenase (NADP(+)).